We begin with the raw amino-acid sequence, 609 residues long: MTSATIPGLDTAPTNHQGLLSWVQEVAELTQPDRVVFADGSDEEFNRLAAELVEAGTLKKLNEKKHPNSYLALSDPSDVARVESRTYICTEEESGAGPTNNWMDPTEMRSIMTDLYRGCMRGRTMWVVPFCMGPLGVEDPKLGVEITDSEYVVISMKVMTRMGKAALEKMGDDGFFVKALHSVGAPLEPGQKDVPWPCNDTKYITHFPETREIWSYGSGYGGNALLGKKCYSLRIASAMAHDEGWLAEHMLILKLISPENKAYYFAAAFPSACGKTNLAMLQPTIPGWRAETLGDDIAWMRFGKDGRLYAVNPEFGFFGVAPGTNWKSNPNAMRTIEAGNTVFTNVALTDDNDVWWEGLEGQPEHLIDWKGNDWYAGKTETPAAHPNSRYCTPMSQCPILAPEWDDPQGVPISGILFGARRKTTVPLVTQARDWQHGVFMGATMGSEQTAAAEGKVGTVRRDPMAMLPFLGYHVGDYFQHWIDLGKNSDESKLPKVFFVNWFRRGDDGGFLWPGFGENSRVLKWIVDRIEHKAGGQDTPIGIVPKAEDLDLDGLDVSVDDVAKALAVNPDEWREELPQIEEWFEFVGEKLPTGVRDEFEALKQRLSEAG.

Substrate contacts are provided by residues Arg81 and 220–222; that span reads YGG. Residues Lys229 and His249 each coordinate Mn(2+). Position 271 (Ser271) interacts with substrate. 272–277 contributes to the GTP binding site; that stretch reads ACGKTN. Cys273 is a catalytic residue. Asp296 contacts Mn(2+). 387–389 provides a ligand contact to substrate; the sequence is NSR. GTP is bound by residues Arg389, Arg420, and 515-518; that span reads FGEN.

The protein belongs to the phosphoenolpyruvate carboxykinase [GTP] family. In terms of assembly, monomer. Mn(2+) is required as a cofactor.

The protein resides in the cytoplasm. The catalysed reaction is oxaloacetate + GTP = phosphoenolpyruvate + GDP + CO2. It functions in the pathway carbohydrate biosynthesis; gluconeogenesis. In terms of biological role, catalyzes the conversion of oxaloacetate (OAA) to phosphoenolpyruvate (PEP), the rate-limiting step in the metabolic pathway that produces glucose from lactate and other precursors derived from the citric acid cycle. This Mycolicibacterium paratuberculosis (strain ATCC BAA-968 / K-10) (Mycobacterium paratuberculosis) protein is Phosphoenolpyruvate carboxykinase [GTP].